Reading from the N-terminus, the 261-residue chain is Yop proteins translocation protein T (261 aa).

7 helical membrane passes run 20–40, 44–64, 77–97, 131–151, 180–200, 214–234, and 239–259; these read FMAC…GVLL, IVCS…YIEV, IILG…LESA, TLIT…ALFH, ILLI…LAEF, VFVL…VIYC, and SHAS…IPVL.

This sequence belongs to the FliR/MopE/SpaR family.

Its subcellular location is the cell membrane. Component of the yop secretion machinery. The chain is Yop proteins translocation protein T (yscT) from Yersinia pestis.